The primary structure comprises 375 residues: Protein abhd-3.2 (375 aa).

The region spanning 108 to 203 (PIVVFLPGIT…ILWNYLAMTG (96 aa)) is the AB hydrolase-1 domain. Residues serine 189, aspartate 315, and histidine 344 each act as charge relay system in the active site.

The protein belongs to the AB hydrolase superfamily. AB hydrolase 4 family.

This chain is Protein abhd-3.2, found in Caenorhabditis elegans.